A 186-amino-acid chain; its full sequence is UPF0398 protein LBUL_0921 (186 aa).

It belongs to the UPF0398 family.

The sequence is that of UPF0398 protein LBUL_0921 from Lactobacillus delbrueckii subsp. bulgaricus (strain ATCC BAA-365 / Lb-18).